We begin with the raw amino-acid sequence, 459 residues long: NADH-ubiquinone oxidoreductase chain 4 (459 aa).

13 consecutive transmembrane segments (helical) span residues 22 to 42, 60 to 80, 94 to 112, 113 to 133, 145 to 165, 196 to 216, 224 to 244, 257 to 277, 284 to 303, 308 to 330, 351 to 371, 391 to 411, and 435 to 455; these read MIWINTTTHSLIISIIPLLFF, PLTTPLLMLTTWLLPLTIMAS, LYLSMLISLQISLIMTFTA, TELIMFYIFFEATLIPTLVII, AGTYFLFYTLVGSLPLLIALI, WLAYTMAFMVKMPLYGLHLWL, PIAGSMMLAAVLLKLGGYGMM, MAYPFLALSLWGMIMTSSISL, SLIAYSSISHMALVVAAILI, SFTGAVVLMIAHGLTSSLLFCLA, LLPLMALWWLLASLANLALPP, TTLLLTGSNMLITALYSLYMF, and ILMFMHLSPILLLSLNPDIIT.

The protein belongs to the complex I subunit 4 family. Core subunit of respiratory chain NADH dehydrogenase (Complex I) which is composed of 45 different subunits.

Its subcellular location is the mitochondrion inner membrane. It catalyses the reaction a ubiquinone + NADH + 5 H(+)(in) = a ubiquinol + NAD(+) + 4 H(+)(out). In terms of biological role, core subunit of the mitochondrial membrane respiratory chain NADH dehydrogenase (Complex I) which catalyzes electron transfer from NADH through the respiratory chain, using ubiquinone as an electron acceptor. Essential for the catalytic activity and assembly of complex I. The sequence is that of NADH-ubiquinone oxidoreductase chain 4 (MT-ND4) from Gorilla gorilla gorilla (Western lowland gorilla).